The chain runs to 635 residues: Leucine-rich repeat and fibronectin type-III domain-containing protein 4 (635 aa).

The N-terminal stretch at 1-16 (MAPPLLLLLLASGAAA) is a signal peptide. Positions 17–48 (CPLPCVCQNLSESLSTLCAHRGLLFVPPNVDR) constitute an LRRNT domain. Topologically, residues 17–518 (CPLPCVCQNL…LQAHVLGGTL (502 aa)) are extracellular. Residues Asn-25 and Asn-70 are each glycosylated (N-linked (GlcNAc...) asparagine). LRR repeat units follow at residues 49-70 (RTVELRLADNFIQALGPPDFRN), 73-94 (GLVDLTLSRNAITRIGARAFGD), 97-118 (SLRSLHLDGNRLVELGTGSLRG), 121-142 (NLQHLILSGNQLGRIAPGAFDD), 146-161 (SLEDLDLSYNNLRQVP), 170-191 (ALHTLNLDHNLIDALPPGAFAQ), and 194-215 (QLSRLDLTSNRLATLAPDPLFS). The LRRCT domain maps to 234-280 (NPLHCNCELLWLRRLARPDDLETCASPPGLAGRYFWAVPEGEFSCEP). The 87-residue stretch at 281 to 367 (PLIARHTQRL…GEATARVELR (87 aa)) folds into the Ig-like domain. Cys-302 and Cys-351 are joined by a disulfide. N-linked (GlcNAc...) asparagine glycans are attached at residues Asn-324, Asn-333, Asn-376, and Asn-440. The tract at residues 373–410 (HGGNSSAEGGRPGPSDIAASARTAAEGEGTLESEPAVQ) is disordered. The Fibronectin type-III domain occupies 405–502 (SEPAVQVTEV…GCAHFSTLPA (98 aa)). Residues 519-539 (TVAVGGVLVAALLVFTVALLV) traverse the membrane as a helical segment. The Cytoplasmic portion of the chain corresponds to 540–635 (RGRGAGNGRL…SAERLEESVV (96 aa)). A disordered region spans residues 555–583 (HVQSQTNGGPSPTPKAHPPRSPPPRPQRS). The segment covering 565–580 (SPTPKAHPPRSPPPRP) has biased composition (pro residues). Residues Ser-585 and Ser-626 each carry the phosphoserine modification. The PDZ-binding motif lies at 632–635 (ESVV).

Belongs to the LRFN family. Can form heteromeric complexes with LRFN1, LRFN2, LRFN3 and LRFN5. Unable to form homophilic interactions across cell junctions. Interacts with DLG1, DLG2, DLG3 and DLG4. In terms of processing, glycosylated.

It is found in the membrane. Functionally, promotes neurite outgrowth in hippocampal neurons. May play a role in redistributing DLG4 to the cell periphery. This chain is Leucine-rich repeat and fibronectin type-III domain-containing protein 4 (LRFN4), found in Homo sapiens (Human).